The chain runs to 125 residues: Neuraminyllactose-binding hemagglutinin (125 aa).

Positions 92 to 97 are N-acetyl-neuraminyl-alpha(2,3)-lactose binding motif; the sequence is KRTIQK.

It is found in the cell outer membrane. In Helicobacter pylori (Campylobacter pylori), this protein is Neuraminyllactose-binding hemagglutinin (hpaA).